The chain runs to 159 residues: Endoribonuclease YbeY (159 aa).

Residues His-120, His-124, and His-130 each coordinate Zn(2+).

Belongs to the endoribonuclease YbeY family. It depends on Zn(2+) as a cofactor.

It is found in the cytoplasm. Its function is as follows. Single strand-specific metallo-endoribonuclease involved in late-stage 70S ribosome quality control and in maturation of the 3' terminus of the 16S rRNA. The chain is Endoribonuclease YbeY from Parafrankia sp. (strain EAN1pec).